The chain runs to 214 residues: Calcineurin B homologous protein 3 (214 aa).

Gly2 is lipidated: N-myristoyl glycine. Residues 110 to 145 (CRKDKLRFLFNMYDTDNDSKITLEEYRKVVEELLSG) enclose the EF-hand domain. Asp123, Asp125, Asp127, Lys129, and Glu134 together coordinate Ca(2+).

It belongs to the calcineurin regulatory subunit family. CHP subfamily. As to quaternary structure, monomer. Homodimer.

The protein resides in the nucleus. It is found in the cytoplasm. It localises to the membrane. Its subcellular location is the cell membrane. The protein localises to the cell projection. The protein resides in the lamellipodium. It is found in the ruffle membrane. Its function is as follows. Functions as an integral cofactor in cell pH regulation by controlling plasma membrane-type Na(+)/H(+) exchange activity. Promotes the induction of hematopoietic stem cell differentiation toward megakaryocytic lineage. Essential for the coupling of ERK cascade activation with the expression of ETS family genes in megakaryocytic differentiation. Also involved in granulocytic differentiation in a ERK-dependent manner. Inhibits the phosphatase activity of calcineurin. The polypeptide is Calcineurin B homologous protein 3 (tesc) (Xenopus tropicalis (Western clawed frog)).